The following is a 508-amino-acid chain: Photosystem II CP47 reaction center protein (508 aa).

A run of 6 helical transmembrane segments spans residues 21–36, 101–115, 140–156, 203–218, 237–252, and 457–472; these read AVHI…WAGS, IVFS…IWHW, GIHL…FGAF, IAAG…FHLS, VLSS…AFVV, and SFAL…HGAR.

It belongs to the PsbB/PsbC family. PsbB subfamily. As to quaternary structure, PSII is composed of 1 copy each of membrane proteins PsbA, PsbB, PsbC, PsbD, PsbE, PsbF, PsbH, PsbI, PsbJ, PsbK, PsbL, PsbM, PsbT, PsbX, PsbY, PsbZ, Psb30/Ycf12, at least 3 peripheral proteins of the oxygen-evolving complex and a large number of cofactors. It forms dimeric complexes. Binds multiple chlorophylls. PSII binds additional chlorophylls, carotenoids and specific lipids. serves as cofactor.

It is found in the plastid. It localises to the chloroplast thylakoid membrane. In terms of biological role, one of the components of the core complex of photosystem II (PSII). It binds chlorophyll and helps catalyze the primary light-induced photochemical processes of PSII. PSII is a light-driven water:plastoquinone oxidoreductase, using light energy to abstract electrons from H(2)O, generating O(2) and a proton gradient subsequently used for ATP formation. In Trachelium caeruleum (Blue throatwort), this protein is Photosystem II CP47 reaction center protein.